The following is a 440-amino-acid chain: Virion host shutoff protein (440 aa).

Disordered regions lie at residues 98 to 144 (NIDH…RRKT) and 265 to 312 (IDEP…AGPG). A compositionally biased stretch (low complexity) spans 266-281 (DEPPAASEESSASDQQ).

The protein belongs to the herpesviridae VHS protein family.

It localises to the virion. Functionally, minor structural protein that acts as an endoribonuclease during lytic infection. Degrades host mRNAs in the cytoplasm by cutting them at preferred sites, including some in regions of translation initiation. This is Virion host shutoff protein (UL41) from Amazona oratrix (yellow-headed parrot).